The sequence spans 421 residues: Diaminobutyrate--2-oxoglutarate transaminase (421 aa).

Residue lysine 267 is modified to N6-(pyridoxal phosphate)lysine.

The protein belongs to the class-III pyridoxal-phosphate-dependent aminotransferase family. Homohexamer. Requires pyridoxal 5'-phosphate as cofactor.

The enzyme catalyses L-2,4-diaminobutanoate + 2-oxoglutarate = L-aspartate 4-semialdehyde + L-glutamate. Its pathway is amine and polyamine biosynthesis; ectoine biosynthesis; L-ectoine from L-aspartate 4-semialdehyde: step 1/3. Catalyzes reversively the conversion of L-aspartate beta-semialdehyde (ASA) to L-2,4-diaminobutyrate (DABA) by transamination with L-glutamate. Seems to use L-glutamate specifically as the amino group donor to ASA, as it is not active with L-alanine, L-glutamine, L-aspartate and L-lysine, and is only poorly active with L-homoserine. In the reverse reaction, gamma-aminobutyric acid (GABA) and L-ornithine can also be used as amino group donors to 2-oxoglutarate, but with a reduced activity compared to that with DABA. The polypeptide is Diaminobutyrate--2-oxoglutarate transaminase (ectB) (Halomonas elongata (strain ATCC 33173 / DSM 2581 / NBRC 15536 / NCIMB 2198 / 1H9)).